Reading from the N-terminus, the 323-residue chain is Fructose-1,6-bisphosphatase class 1 (323 aa).

4 residues coordinate Mg(2+): E84, D103, L105, and D106. Residues 106–109 (DGSS), N198, and K264 each bind substrate. E270 contributes to the Mg(2+) binding site.

The protein belongs to the FBPase class 1 family. As to quaternary structure, homotetramer. Mg(2+) serves as cofactor.

The protein resides in the cytoplasm. It carries out the reaction beta-D-fructose 1,6-bisphosphate + H2O = beta-D-fructose 6-phosphate + phosphate. It participates in carbohydrate biosynthesis; gluconeogenesis. The protein is Fructose-1,6-bisphosphatase class 1 of Pseudoalteromonas atlantica (strain T6c / ATCC BAA-1087).